The sequence spans 403 residues: S-adenosylmethionine synthase (403 aa).

Residue His17 participates in ATP binding. Position 19 (Asp19) interacts with Mg(2+). Glu45 serves as a coordination point for K(+). The L-methionine site is built by Glu58 and Gln101. The segment at 101–111 is flexible loop; the sequence is QSPDIAMGVDR. ATP-binding positions include 177-179, 244-245, Asp253, 259-260, Ala276, and Lys280; these read DGK, RF, and RK. Residue Asp253 coordinates L-methionine. Residue Lys284 participates in L-methionine binding.

The protein belongs to the AdoMet synthase family. Homotetramer; dimer of dimers. Mg(2+) is required as a cofactor. It depends on K(+) as a cofactor.

The protein resides in the cytoplasm. The catalysed reaction is L-methionine + ATP + H2O = S-adenosyl-L-methionine + phosphate + diphosphate. The protein operates within amino-acid biosynthesis; S-adenosyl-L-methionine biosynthesis; S-adenosyl-L-methionine from L-methionine: step 1/1. Its function is as follows. Catalyzes the formation of S-adenosylmethionine (AdoMet) from methionine and ATP. The overall synthetic reaction is composed of two sequential steps, AdoMet formation and the subsequent tripolyphosphate hydrolysis which occurs prior to release of AdoMet from the enzyme. The protein is S-adenosylmethionine synthase of Geobacillus kaustophilus (strain HTA426).